A 326-amino-acid polypeptide reads, in one-letter code: N-(2-amino-2-carboxyethyl)-L-glutamate synthase (326 aa).

At lysine 47 the chain carries N6-(pyridoxal phosphate)lysine. Pyridoxal 5'-phosphate is bound by residues asparagine 77, 185 to 189 (STTGS), and serine 272.

It belongs to the cysteine synthase/cystathionine beta-synthase family. SbnA subfamily. As to quaternary structure, homodimer. Pyridoxal 5'-phosphate is required as a cofactor.

It carries out the reaction O-phospho-L-serine + L-glutamate = N-[(2S)-2-amino-2-carboxyethyl]-L-glutamate + phosphate + H(+). Its pathway is siderophore biosynthesis. In terms of biological role, catalyzes the synthesis of N-((2S)-2-amino-2-carboxyethyl)-L-glutamate (ACEGA) from O-phospho-L-serine and L-glutamate. Involved in the biosynthesis of L-2,3-diaminopropionic acid (L-Dap), a precursor of staphyloferrin B and antibiotics. This Staphylococcus aureus (strain bovine RF122 / ET3-1) protein is N-(2-amino-2-carboxyethyl)-L-glutamate synthase (sbnA).